The sequence spans 372 residues: CXADR-like membrane protein (372 aa).

The first 17 residues, Met1–Gly17, serve as a signal peptide directing secretion. 2 Ig-like C2-type domains span residues Thr18 to Lys126 and Pro134 to Thr223. Topologically, residues Thr18–Ala234 are extracellular. Disulfide bonds link Cys34-Cys110 and Cys152-Cys207. Residues Asn73 and Asn196 are each glycosylated (N-linked (GlcNAc...) asparagine). The helical transmembrane segment at Gly235–Ile255 threads the bilayer. The Cytoplasmic portion of the chain corresponds to Arg256–Val372. The span at Tyr263–Arg280 shows a compositional bias: basic and acidic residues. Residues Tyr263–Val372 form a disordered region. Composition is skewed to low complexity over residues Ser287–Ser313 and Leu352–Thr361. A compositionally biased stretch (polar residues) spans Met362–Val372.

As to expression, predominantly expressed in the white adipose tissue.

Its subcellular location is the cell junction. It localises to the tight junction. It is found in the cell membrane. May be involved in the cell-cell adhesion. May play a role in adipocyte differentiation and development of obesity. Is required for normal small intestine development. The protein is CXADR-like membrane protein (Clmp) of Rattus norvegicus (Rat).